We begin with the raw amino-acid sequence, 198 residues long: Protein uvp1 (198 aa).

A Resolvase/invertase-type recombinase catalytic domain is found at 1–140 (MIIGYARKST…SGLAAARARG (140 aa)). The active-site O-(5'-phospho-DNA)-serine intermediate is Ser9. A DNA-binding region (H-T-H motif) is located at residues 168-187 (VGAVAKRFNVSRMTIYRYTT).

The protein belongs to the site-specific recombinase resolvase family.

Its function is as follows. Cooperates with the mucAB genes in the DNA repair process. Could be a resolvase-invertase protein. The sequence is that of Protein uvp1 (uvp1) from Escherichia coli.